A 224-amino-acid chain; its full sequence is Phosphoglycolate phosphatase (224 aa).

Aspartate 11 serves as the catalytic Nucleophile. Mg(2+) is bound by residues aspartate 11, aspartate 13, and aspartate 177.

Belongs to the HAD-like hydrolase superfamily. CbbY/CbbZ/Gph/YieH family. It depends on Mg(2+) as a cofactor.

The catalysed reaction is 2-phosphoglycolate + H2O = glycolate + phosphate. Its pathway is organic acid metabolism; glycolate biosynthesis; glycolate from 2-phosphoglycolate: step 1/1. Specifically catalyzes the dephosphorylation of 2-phosphoglycolate. Is involved in the dissimilation of the intracellular 2-phosphoglycolate formed during the DNA repair of 3'-phosphoglycolate ends, a major class of DNA lesions induced by oxidative stress. The sequence is that of Phosphoglycolate phosphatase from Haemophilus influenzae (strain ATCC 51907 / DSM 11121 / KW20 / Rd).